The following is a 142-amino-acid chain: Large ribosomal subunit protein uL13 (142 aa).

It belongs to the universal ribosomal protein uL13 family. As to quaternary structure, part of the 50S ribosomal subunit.

This protein is one of the early assembly proteins of the 50S ribosomal subunit, although it is not seen to bind rRNA by itself. It is important during the early stages of 50S assembly. The polypeptide is Large ribosomal subunit protein uL13 (Hydrogenovibrio crunogenus (strain DSM 25203 / XCL-2) (Thiomicrospira crunogena)).